The following is a 386-amino-acid chain: Succinate--CoA ligase [ADP-forming] subunit beta (386 aa).

Residues 9–244 (KELLRQYGVA…LDEEDPKEIE (236 aa)) form the ATP-grasp domain. ATP-binding positions include K46, 53–55 (GRG), E99, C102, and E107. Mg(2+) contacts are provided by N199 and D213. Substrate contacts are provided by residues N264 and 321–323 (GIM).

The protein belongs to the succinate/malate CoA ligase beta subunit family. In terms of assembly, heterotetramer of two alpha and two beta subunits. The cofactor is Mg(2+).

It carries out the reaction succinate + ATP + CoA = succinyl-CoA + ADP + phosphate. It catalyses the reaction GTP + succinate + CoA = succinyl-CoA + GDP + phosphate. It functions in the pathway carbohydrate metabolism; tricarboxylic acid cycle; succinate from succinyl-CoA (ligase route): step 1/1. Succinyl-CoA synthetase functions in the citric acid cycle (TCA), coupling the hydrolysis of succinyl-CoA to the synthesis of either ATP or GTP and thus represents the only step of substrate-level phosphorylation in the TCA. The beta subunit provides nucleotide specificity of the enzyme and binds the substrate succinate, while the binding sites for coenzyme A and phosphate are found in the alpha subunit. The polypeptide is Succinate--CoA ligase [ADP-forming] subunit beta (Halalkalibacterium halodurans (strain ATCC BAA-125 / DSM 18197 / FERM 7344 / JCM 9153 / C-125) (Bacillus halodurans)).